We begin with the raw amino-acid sequence, 199 residues long: Mediator of RNA polymerase II transcription subunit 10 (199 aa).

This sequence belongs to the Mediator complex subunit 10 family. In terms of assembly, component of the Mediator complex.

The protein localises to the nucleus. In terms of biological role, component of the Mediator complex, a coactivator involved in the regulated transcription of nearly all RNA polymerase II-dependent genes. Mediator functions as a bridge to convey information from gene-specific regulatory proteins to the basal RNA polymerase II transcription machinery. Mediator is recruited to promoters by direct interactions with regulatory proteins and serves as a scaffold for the assembly of a functional preinitiation complex with RNA polymerase II and the general transcription factors. In Candida glabrata (strain ATCC 2001 / BCRC 20586 / JCM 3761 / NBRC 0622 / NRRL Y-65 / CBS 138) (Yeast), this protein is Mediator of RNA polymerase II transcription subunit 10 (NUT2).